Here is a 512-residue protein sequence, read N- to C-terminus: Tyrosine-protein kinase Lyn (512 aa).

The segment at 1-45 (MGCIKSKRKDNLNDDEVDSKTQPVRNTDRTIYVRDPTSNKQQRPV) is disordered. Gly2 carries N-myristoyl glycine lipidation. Residue Cys3 is the site of S-palmitoyl cysteine attachment. Position 19 is a phosphoserine (Ser19). Residues 63–123 (EQGDIVVALY…PSNYVAKVNT (61 aa)) enclose the SH3 domain. In terms of domain architecture, SH2 spans 129–226 (WFFKDITRKD…GLCRRLEKAC (98 aa)). Tyr193 is modified (phosphotyrosine). Phosphoserine is present on Ser228. Positions 247–501 (IKLVKKLGAG…YLQSVLDDFY (255 aa)) constitute a Protein kinase domain. ATP contacts are provided by residues 253–261 (LGAGQFGEV) and Lys275. Phosphotyrosine is present on residues Tyr306 and Tyr316. The Proton acceptor role is filled by Asp367. Position 397 is a phosphotyrosine; by autocatalysis (Tyr397). A phosphotyrosine mark is found at Tyr460 and Tyr473. Tyr508 carries the post-translational modification Phosphotyrosine; by autocatalysis, CSK and MATK.

This sequence belongs to the protein kinase superfamily. Tyr protein kinase family. SRC subfamily. In terms of assembly, interacts with TEC. Interacts (via SH2 domain) with FLT3 (tyrosine phosphorylated). Interacts with LIME1 and with CD79A upon activation of the B-cell antigen receptor. Interacts with the B-cell receptor complex. Interacts with phosphorylated THEMIS2. Interacts with EPOR. Interacts with MS4A2/FCER1B. Interaction (via the SH2 and SH3 domains) with MUC1 is stimulated by IL7 and the subsequent phosphorylation increases the binding between MUC1 and CTNNB1/beta-catenin. Interacts with ADAM15. Interacts with NDFIP2 and more weakly with NDFIP1. Interacts with FASLG. Interacts with KIT. Interacts with HCLS1. Interacts with FCGR2B. Interacts with FCGR1A; the interaction may be indirect. Interacts with CD19, CD22, CD79A and CD79B. Interacts (via SH3 domain) with CBLC, PPP1R15A and PDE4A. Interacts with TGFB1I1. Interacts (via SH3 domain) with PIK3R1, the regulatory subunit of phosphatidylinositol 3-kinase; this interaction enhances phosphatidylinositol 3-kinase activity. Interacts with CSF2RB, the common subunit of the IL3, IL5 and CSF2 receptors. Interacts with PAG1; identified in a complex with PAG1 and STAT3. Interacts with ABL1. Interacts with PTPN6/SHP-1. Interacts (via SH3 domain) with SCIMP (via proline-rich region). This interaction facilitates the phosphorylation of SCIMP on 'Tyr-96', which enhances binding of SCIMP to TLR4, and consequently the phosphorylation of TLR4 in response to stimulation by lipopolysaccharide in macrophages. Interacts with LPXN (via LD motif 3) and the interaction is induced upon B-cell antigen receptor (BCR) activation. Interacts (via SH3-domain) with ANKRD54 (via ankyrin repeat region) in an activation-independent status of LYN. Forms a multiprotein complex with ANKRD54 and HCLS1. Interacts (via SH2 and SH3 domains) with UNC119; leading to LYN activation. Interacts with CD36. Interacts with LYN. Interacts with SKAP1 and FYB1; this interaction promotes the phosphorylation of CLNK. Interacts with BCAR1/CAS and NEDD9/HEF1. In terms of processing, ubiquitinated by CBL, leading to its degradation. Post-translationally, autophosphorylated. Phosphorylated on tyrosine residues in response to KIT signaling. Phosphorylation at Tyr-397 is required for optimal activity. Phosphorylation at Tyr-508 inhibits kinase activity. Phosphorylated at Tyr-508 by CSK. Dephosphorylated by PTPRC/CD45. Becomes rapidly phosphorylated upon activation of the B-cell receptor and the immunoglobulin receptor FCGR1A. Phosphorylated in response to ITGB1 in B-cells. Detected in bone marrow-derived monocytes and macrophages (at protein level). Expressed predominantly in B-lymphoid and myeloid cells.

It localises to the cell membrane. Its subcellular location is the nucleus. It is found in the cytoplasm. The protein resides in the perinuclear region. The protein localises to the golgi apparatus. It localises to the membrane. The catalysed reaction is L-tyrosyl-[protein] + ATP = O-phospho-L-tyrosyl-[protein] + ADP + H(+). Subject to autoinhibition, mediated by intramolecular interactions between the SH2 domain and the C-terminal phosphotyrosine. Phosphorylation at Tyr-397 is required for optimal activity. Phosphorylated by CSK at Tyr-508; phosphorylation at Tyr-508 inhibits kinase activity. Kinase activity is modulated by dephosphorylation by PTPRC/CD45. Inhibited by dasatinib, PP2, and SU6656. In terms of biological role, non-receptor tyrosine-protein kinase that transmits signals from cell surface receptors and plays an important role in the regulation of innate and adaptive immune responses, hematopoiesis, responses to growth factors and cytokines, integrin signaling, but also responses to DNA damage and genotoxic agents. Functions primarily as negative regulator, but can also function as activator, depending on the context. Required for the initiation of the B-cell response, but also for its down-regulation and termination. Plays an important role in the regulation of B-cell differentiation, proliferation, survival and apoptosis, and is important for immune self-tolerance. Acts downstream of several immune receptors, including the B-cell receptor, CD79A, CD79B, CD5, CD19, CD22, FCER1, FCGR2, FCGR1A, TLR2 and TLR4. Plays a role in the inflammatory response to bacterial lipopolysaccharide. Mediates the responses to cytokines and growth factors in hematopoietic progenitors, platelets, erythrocytes, and in mature myeloid cells, such as dendritic cells, neutrophils and eosinophils. Acts downstream of EPOR, KIT, MPL, the chemokine receptor CXCR4, as well as the receptors for IL3, IL5 and CSF2. Plays an important role in integrin signaling. Regulates cell proliferation, survival, differentiation, migration, adhesion, degranulation, and cytokine release. Involved in the regulation of endothelial activation, neutrophil adhesion and transendothelial migration. Down-regulates signaling pathways by phosphorylation of immunoreceptor tyrosine-based inhibitory motifs (ITIM), that then serve as binding sites for phosphatases, such as PTPN6/SHP-1, PTPN11/SHP-2 and INPP5D/SHIP-1, that modulate signaling by dephosphorylation of kinases and their substrates. Phosphorylates LIME1 in response to CD22 activation. Phosphorylates BTK, CBL, CD5, CD19, CD72, CD79A, CD79B, CSF2RB, DOK1, HCLS1, MS4A2/FCER1B, SYK and TEC. Phosphorylates PIRB at Tyr-794 and Tyr-824, which is required for PIRB interaction with PTPN6/SHP-1 and PTPN11/SHP-2. Promotes phosphorylation of SIRPA, PTPN6/SHP-1, PTPN11/SHP-2 and INPP5D/SHIP-1. Required for rapid phosphorylation of FER in response to FCER1 activation. Mediates KIT phosphorylation. Acts as an effector of EPOR (erythropoietin receptor) in controlling KIT expression and may play a role in erythroid differentiation during the switch between proliferation and maturation. Depending on the context, activates or inhibits several signaling cascades. Regulates phosphatidylinositol 3-kinase activity and AKT1 activation. Regulates activation of the MAP kinase signaling cascade, including activation of MAP2K1/MEK1, MAPK1/ERK2, MAPK3/ERK1, MAPK8/JNK1 and MAPK9/JNK2. Mediates activation of STAT5A and/or STAT5B. Phosphorylates LPXN on 'Tyr-72'. Kinase activity facilitates TLR4-TLR6 heterodimerization and signal initiation. Phosphorylates SCIMP on 'Tyr-96'; this enhances binding of SCIMP to TLR4, promoting the phosphorylation of TLR4, and a selective cytokine response to lipopolysaccharide in macrophages. Phosphorylates CLNK. Phosphorylates BCAR1/CAS and NEDD9/HEF1. The chain is Tyrosine-protein kinase Lyn (Lyn) from Mus musculus (Mouse).